Reading from the N-terminus, the 141-residue chain is uncharacterized protein (141 aa).

4 consecutive transmembrane segments (helical) span residues 7-27 (VAIMTTISAFLFCAVIVAASL), 47-67 (SAVGMILVLYFIPFLVYMLGV), 75-95 (AVLCGFGLLIHLSSAGFILMF), and 106-126 (VIFVLGVSLAAAAVNVIWFVA).

The protein resides in the cell membrane. This is an uncharacterized protein from Bacillus subtilis (strain 168).